Here is a 485-residue protein sequence, read N- to C-terminus: Serine/threonine-protein kinase 4 (485 aa).

Residues 30–281 (FDVLEKLGEG…ATELLQHPFI (252 aa)) form the Protein kinase domain. ATP contacts are provided by residues 36–44 (LGEGSYGSV) and K59. The active-site Proton acceptor is the D149. T183 carries the post-translational modification Phosphothreonine; by autocatalysis. Residues 287–313 (ESILRHLINEAQDAKLKRTELKQREVE) adopt a coiled-coil conformation. The SARAH domain occupies 431 to 478 (YSFLKDWSVTELQLRLNSLDPMMEQEIEEIHHKYQAKRQPILEAIESK).

This sequence belongs to the protein kinase superfamily. STE Ser/Thr protein kinase family. STE20 subfamily. In terms of assembly, homodimer; mediated via the coiled-coil region. Mg(2+) serves as cofactor. Post-translationally, autophosphorylated on Thr-183. In terms of processing, proteolytically cleaved by caspase-3 during apoptosis at Asp-326 resulting in a 37 kDa form. Proteolytic cleavage results in kinase activation and nuclear translocation of the truncated form (MST1/N).

It is found in the cytoplasm. The protein resides in the nucleus. The enzyme catalyses L-seryl-[protein] + ATP = O-phospho-L-seryl-[protein] + ADP + H(+). It catalyses the reaction L-threonyl-[protein] + ATP = O-phospho-L-threonyl-[protein] + ADP + H(+). Its activity is regulated as follows. The C-terminal non-catalytic region inhibits the kinase activity, the enzyme is activated by caspase-cleavage. Homodimerization and autophosphorylation of Thr-183 is also required for full activation. In terms of biological role, stress-activated, pro-apoptotic kinase which, following caspase-cleavage, enters the nucleus and induces chromatin condensation followed by internucleosomal DNA fragmentation. Key component of the Hippo signaling pathway which plays a pivotal role in organ size control and tumor suppression by restricting proliferation and promoting apoptosis. The core of this pathway is composed of a kinase cascade wherein stk3/mst2 and stk4/mst1, in complex with its regulatory protein sav1, phosphorylates and activates lats1/2 in complex with its regulatory protein mob1, which in turn phosphorylates and inactivates yap1 oncoprotein and wwtr1/taz. Phosphorylation of yap1 by lats2 inhibits its translocation into the nucleus to regulate cellular genes important for cell proliferation, cell death, and cell migration. Phosphorylates 'Ser-14' of histone H2B (H2BS14ph) during apoptosis. The sequence is that of Serine/threonine-protein kinase 4 (stk4) from Xenopus tropicalis (Western clawed frog).